Reading from the N-terminus, the 467-residue chain is Glutamate--tRNA ligase (467 aa).

The 'HIGH' region signature appears at 10 to 20 (PSPTGHLHIGG). Residues cysteine 99, cysteine 101, cysteine 126, and glutamate 128 each coordinate Zn(2+). The short motif at 236 to 240 (RLSKR) is the 'KMSKS' region element. Lysine 239 provides a ligand contact to ATP.

This sequence belongs to the class-I aminoacyl-tRNA synthetase family. Glutamate--tRNA ligase type 1 subfamily. Monomer. Zn(2+) is required as a cofactor.

It is found in the cytoplasm. It carries out the reaction tRNA(Glu) + L-glutamate + ATP = L-glutamyl-tRNA(Glu) + AMP + diphosphate. In terms of biological role, catalyzes the attachment of glutamate to tRNA(Glu) in a two-step reaction: glutamate is first activated by ATP to form Glu-AMP and then transferred to the acceptor end of tRNA(Glu). The polypeptide is Glutamate--tRNA ligase (Desulfosudis oleivorans (strain DSM 6200 / JCM 39069 / Hxd3) (Desulfococcus oleovorans)).